Reading from the N-terminus, the 572-residue chain is MPVVEVDPDELRSLAAIEDKSDDELKDDLFALGLEFEGESDDGDFELEFAPDRLDRLSVEGIARSLRYQYGHDRGIDVPKTNDAEWTITVDESVPEARPYVTGAVVRGLDLDDTQLDSLIQLQEKLHATMGRNRAKGAIGVHDLTMLKGGGARSDGKPSKSITYRGVDPDGDRFVPLDDDAERTPAEVLDAHPTGETYGHLVDGLDRFPAIYDDIGLFSFPPVINGSRTEVDTGTRDLFIELTGTDQWTIDRMLAIICYALSARGGRIESVAVDYGDRTLTRPDLSTTTKTVSHDRIETTLGVDLAGTDVVDLLERSGLDAEADTEGELTYEVEIPAYRVDVLHPADIVDDVGRAFGFNELEPQYPDVSTVGGRHDRSRLEDAVRNTLVGLGFEDLLNFYMTSETELFDRMSLSPDDNAVGAREPPTITEPYSEDYTVVRTWALPSLLMVLENNTHRAYPQDLAEIGLVAGVDESKPTNVAEHRSVAGVVARTDASYEDAKARLQAIGSAFGVDIKTPPTDHPSFIDGRTAAVVIDGEPAGVIGELHPRVLVEHDLEVPVAGFEFRLDALAD.

The B5 domain maps to 285–363 (LSTTTKTVSH…RAFGFNELEP (79 aa)). Positions 341, 347, 350, and 351 each coordinate Mg(2+).

This sequence belongs to the phenylalanyl-tRNA synthetase beta subunit family. Type 2 subfamily. As to quaternary structure, tetramer of two alpha and two beta subunits. The cofactor is Mg(2+).

The protein localises to the cytoplasm. It catalyses the reaction tRNA(Phe) + L-phenylalanine + ATP = L-phenylalanyl-tRNA(Phe) + AMP + diphosphate + H(+). The protein is Phenylalanine--tRNA ligase beta subunit of Natronomonas pharaonis (strain ATCC 35678 / DSM 2160 / CIP 103997 / JCM 8858 / NBRC 14720 / NCIMB 2260 / Gabara) (Halobacterium pharaonis).